The chain runs to 514 residues: Major facilitator superfamily domain-containing protein 4A (514 aa).

Transmembrane regions (helical) follow at residues 19-39, 53-73, 82-102, 107-127, and 139-159; these read LTYWSVFFSFGLCIAFLGPTL, ISWVFLSQQLCLLLGSALGGV, LWALFTSSLAISLVFAVIPFC, VLALVMALAGLAMGCIDTVAN, and AVFLQVLHFFVGFGALLSPLI. N-linked (GlcNAc...) asparagine glycans are attached at residues N177 and N203. 7 helical membrane passes run 221 to 241, 307 to 327, 347 to 367, 376 to 396, 400 to 420, 438 to 458, and 466 to 486; these read YAFWIMALINLPVPMAVLMLL, FFAIHITAALVLFMTDGLTGA, VAGYLPSLFWGFITLGRLLSI, ATMVFINVVGVVVTFLVLLIF, VVFLFVGTASLGLFLSSTFPS, VLVTGAGVGEMVLQMLVGSIF, and FLVCGVIFGCLAFTFYILLLF.

Belongs to the major facilitator superfamily.

Its subcellular location is the membrane. The chain is Major facilitator superfamily domain-containing protein 4A (MFSD4A) from Pongo abelii (Sumatran orangutan).